A 523-amino-acid polypeptide reads, in one-letter code: DNA-directed primase/polymerase protein (523 aa).

Substrate is bound by residues arginine 78, 117–119, and 168–172; these read DLE and KFSHH. The Mn(2+) site is built by aspartate 117 and glutamate 119. Residues 203-230 are disordered; it reads LKKSNPEAPGENRDDVEGTQAKRRKTEE. Substrate is bound by residues 258-261 and lysine 267; that span reads RNFR. Cysteine 390, histidine 397, cysteine 417, and cysteine 422 together coordinate Zn(2+). The Zinc knuckle motif motif lies at 390 to 423; it reads CHNVKRFHKSNNIIIVVDLKEEVWYQKCHDPECR. Residues 467–477 show a composition bias toward low complexity; the sequence is APAESTSTTPS. The interval 467-523 is disordered; the sequence is APAESTSTTPSEDTEGWGDWPDDPAYLRALQEVEEEEEDEDEEVPDELLLQAVNECE. Composition is skewed to acidic residues over residues 478–488 and 498–512; these read EDTEGWGDWPD and EVEE…EVPD.

This sequence belongs to the eukaryotic-type primase small subunit family. It depends on Mn(2+) as a cofactor.

The protein resides in the nucleus. The protein localises to the mitochondrion matrix. It localises to the chromosome. The enzyme catalyses ssDNA + n NTP = ssDNA/pppN(pN)n-1 hybrid + (n-1) diphosphate.. The catalysed reaction is DNA(n) + a 2'-deoxyribonucleoside 5'-triphosphate = DNA(n+1) + diphosphate. DNA primase and DNA polymerase required to tolerate replication-stalling lesions by bypassing them. Required to facilitate mitochondrial and nuclear replication fork progression by initiating de novo DNA synthesis using dNTPs and acting as an error-prone DNA polymerase able to bypass certain DNA lesions. Shows a high capacity to tolerate DNA damage lesions such as 8oxoG and abasic sites in DNA. Provides different translesion synthesis alternatives when DNA replication is stalled: able to synthesize DNA primers downstream of lesions, such as UV lesions, R-loops and G-quadruplexes, to allow DNA replication to continue. Can also realign primers ahead of 'unreadable lesions' such as abasic sites and 6-4 photoproduct (6-4 pyrimidine-pyrimidinone), thereby skipping the lesion. Repriming avoids fork degradation while leading to accumulation of internal ssDNA gaps behind the forks. Also able to incorporate nucleotides opposite DNA lesions such as 8oxoG, like a regular translesion synthesis DNA polymerase. Also required for reinitiating stalled forks after ultraviolet (UV) damage during nuclear DNA replication. Required for mitochondrial DNA (mtDNA) synthesis and replication, by reinitiating synthesis after UV damage or in the presence of chain-terminating nucleotides. In addition to its role in DNA damage response, also required to maintain efficient nuclear and mitochondrial DNA replication in unperturbed cells. This is DNA-directed primase/polymerase protein from Danio rerio (Zebrafish).